A 341-amino-acid polypeptide reads, in one-letter code: 33 kDa chaperonin (341 aa).

Intrachain disulfides connect cysteine 245/cysteine 247 and cysteine 278/cysteine 281.

The protein belongs to the HSP33 family. Post-translationally, under oxidizing conditions two disulfide bonds are formed involving the reactive cysteines. Under reducing conditions zinc is bound to the reactive cysteines and the protein is inactive.

The protein localises to the cytoplasm. Its function is as follows. Redox regulated molecular chaperone. Protects both thermally unfolding and oxidatively damaged proteins from irreversible aggregation. Plays an important role in the bacterial defense system toward oxidative stress. The sequence is that of 33 kDa chaperonin from Thermus thermophilus (strain ATCC 27634 / DSM 579 / HB8).